The chain runs to 203 residues: Urease accessory protein UreG (203 aa).

11 to 18 (GPVGSGKT) is a GTP binding site.

Belongs to the SIMIBI class G3E GTPase family. UreG subfamily. Homodimer. UreD, UreF and UreG form a complex that acts as a GTP-hydrolysis-dependent molecular chaperone, activating the urease apoprotein by helping to assemble the nickel containing metallocenter of UreC. The UreE protein probably delivers the nickel.

The protein resides in the cytoplasm. Its function is as follows. Facilitates the functional incorporation of the urease nickel metallocenter. This process requires GTP hydrolysis, probably effectuated by UreG. The polypeptide is Urease accessory protein UreG (Prochlorococcus marinus (strain MIT 9312)).